A 27-amino-acid polypeptide reads, in one-letter code: Cupiennin-4b (27 aa).

Q27 is modified (glutamine amide).

In terms of tissue distribution, expressed by the venom gland.

It localises to the secreted. This is Cupiennin-4b from Cupiennius salei (American wandering spider).